The chain runs to 593 residues: Polyphenol oxidase, chloroplastic (593 aa).

Low complexity predominate over residues 1–13 (MTSLSPPVVTTPT). A disordered region spans residues 1 to 34 (MTSLSPPVVTTPTVPNPATKPLSPFSQNNSQVSL). The N-terminal 89 residues, 1–89 (MTSLSPPVVT…GMGTDPFAFA (89 aa)), are a transit peptide targeting the chloroplast. The span at 24–34 (PFSQNNSQVSL) shows a compositional bias: polar residues. 2 disulfides stabilise this stretch: C100–C115 and C114–C176. Cu cation contacts are provided by H175, H196, H205, H327, H331, and H361. Positions 179–196 (CDGAYDQVGFPELELQIH) form a cross-link, 2'-(S-cysteinyl)-histidine (Cys-His).

The protein belongs to the tyrosinase family. It depends on Cu(2+) as a cofactor.

The protein localises to the plastid. Its subcellular location is the chloroplast thylakoid lumen. The catalysed reaction is 2 catechol + O2 = 2 1,2-benzoquinone + 2 H2O. Catalyzes the oxidation of mono- and o-diphenols to o-diquinones. The polypeptide is Polyphenol oxidase, chloroplastic (Malus domestica (Apple)).